Reading from the N-terminus, the 84-residue chain is Toxin-like TcoNTxP1 (84 aa).

An N-terminal signal peptide occupies residues 1 to 19 (MKRMILFTSCLLLIDIVVG). Residues 21-82 (KEGYPADSKG…VWDSATNKCG (62 aa)) enclose the LCN-type CS-alpha/beta domain. Intrachain disulfides connect C31-C81, C35-C57, C43-C62, and C47-C64. At C81 the chain carries Cysteine amide. The propeptide occupies 82 to 84 (GKK).

Expressed by the venom gland.

The protein resides in the secreted. In terms of biological role, this protein is not toxic. It induces an immune response similar to that induced by whole venom. Thus, polyclonal antibodies raised against this protein can neutralize the effects of the venom. This chain is Toxin-like TcoNTxP1, found in Tityus costatus (Brazilian scorpion).